Reading from the N-terminus, the 94-residue chain is Co-chaperonin GroES (94 aa).

It belongs to the GroES chaperonin family. Heptamer of 7 subunits arranged in a ring. Interacts with the chaperonin GroEL.

The protein resides in the cytoplasm. Functionally, together with the chaperonin GroEL, plays an essential role in assisting protein folding. The GroEL-GroES system forms a nano-cage that allows encapsulation of the non-native substrate proteins and provides a physical environment optimized to promote and accelerate protein folding. GroES binds to the apical surface of the GroEL ring, thereby capping the opening of the GroEL channel. This chain is Co-chaperonin GroES, found in Streptococcus pneumoniae (strain ATCC BAA-255 / R6).